A 122-amino-acid polypeptide reads, in one-letter code: Small ribosomal subunit protein uS13 (122 aa).

Positions 94–122 (RGLPVRGQKTKTNARTRKGPRKTVAGKRK) are disordered.

It belongs to the universal ribosomal protein uS13 family. In terms of assembly, part of the 30S ribosomal subunit. Forms a loose heterodimer with protein S19. Forms two bridges to the 50S subunit in the 70S ribosome.

Located at the top of the head of the 30S subunit, it contacts several helices of the 16S rRNA. In the 70S ribosome it contacts the 23S rRNA (bridge B1a) and protein L5 of the 50S subunit (bridge B1b), connecting the 2 subunits; these bridges are implicated in subunit movement. Contacts the tRNAs in the A and P-sites. The polypeptide is Small ribosomal subunit protein uS13 (Syntrophotalea carbinolica (strain DSM 2380 / NBRC 103641 / GraBd1) (Pelobacter carbinolicus)).